An 80-amino-acid chain; its full sequence is Transcription elongation factor 1 homolog (80 aa).

The Zn(2+) site is built by Cys25, Cys28, Cys49, and Cys52.

The protein belongs to the ELOF1 family.

It is found in the nucleus. Transcription elongation factor implicated in the maintenance of proper chromatin structure in actively transcribed regions. This Encephalitozoon cuniculi (strain GB-M1) (Microsporidian parasite) protein is Transcription elongation factor 1 homolog.